A 375-amino-acid polypeptide reads, in one-letter code: 23S rRNA (uracil(747)-C(5))-methyltransferase RlmC (375 aa).

4 residues coordinate [4Fe-4S] cluster: Cys3, Cys11, Cys14, and Cys87. Gln212, Phe241, Glu262, and Asn307 together coordinate S-adenosyl-L-methionine. The Nucleophile role is filled by Cys334.

Belongs to the class I-like SAM-binding methyltransferase superfamily. RNA M5U methyltransferase family. RlmC subfamily.

It carries out the reaction uridine(747) in 23S rRNA + S-adenosyl-L-methionine = 5-methyluridine(747) in 23S rRNA + S-adenosyl-L-homocysteine + H(+). Functionally, catalyzes the formation of 5-methyl-uridine at position 747 (m5U747) in 23S rRNA. The polypeptide is 23S rRNA (uracil(747)-C(5))-methyltransferase RlmC (Enterobacter sp. (strain 638)).